The following is a 276-amino-acid chain: Energy-coupling factor transporter ATP-binding protein EcfA1 (276 aa).

One can recognise an ABC transporter domain in the interval 2 to 237; sequence IEIKNLKFKY…GSELVDLGLD (236 aa). 37 to 44 is an ATP binding site; sequence GHNGSGKS.

The protein belongs to the ABC transporter superfamily. Energy-coupling factor EcfA family. As to quaternary structure, forms a stable energy-coupling factor (ECF) transporter complex composed of 2 membrane-embedded substrate-binding proteins (S component), 2 ATP-binding proteins (A component) and 2 transmembrane proteins (T component).

The protein localises to the cell membrane. ATP-binding (A) component of a common energy-coupling factor (ECF) ABC-transporter complex. Unlike classic ABC transporters this ECF transporter provides the energy necessary to transport a number of different substrates. This is Energy-coupling factor transporter ATP-binding protein EcfA1 from Streptococcus thermophilus (strain ATCC BAA-491 / LMD-9).